We begin with the raw amino-acid sequence, 406 residues long: Ribose-phosphate pyrophosphokinase 3, mitochondrial (406 aa).

The interval 1-32 is disordered; that stretch reads MAATPHRHLLQPCKNPAISSSETLKPSSSFSL. Residues 1–87 constitute a mitochondrion transit peptide; sequence MAATPHRHLL…RRFQMSSNQE (87 aa). Residues 18–32 are compositionally biased toward low complexity; that stretch reads ISSSETLKPSSSFSL. Positions 226 and 228 each coordinate Mg(2+). The interval 309-324 is binding of phosphoribosylpyrophosphate; sequence GRHVVIVDDLVQSGGT.

Belongs to the ribose-phosphate pyrophosphokinase family.

It is found in the mitochondrion. The enzyme catalyses D-ribose 5-phosphate + ATP = 5-phospho-alpha-D-ribose 1-diphosphate + AMP + H(+). This is Ribose-phosphate pyrophosphokinase 3, mitochondrial (PRS3) from Spinacia oleracea (Spinach).